The sequence spans 868 residues: DNA topoisomerase 1 (868 aa).

Positions 3-148 (KSLVIVESPA…RFSRVVFNEI (146 aa)) constitute a Toprim domain. Mg(2+) is bound by residues glutamate 9 and aspartate 117. In terms of domain architecture, Topo IA-type catalytic spans 164–581 (NLDRVNAQQT…QFFKDFSQQL (418 aa)). An interaction with DNA region spans residues 198 to 203 (SAGRVQ). Tyrosine 325 (O-(5'-phospho-DNA)-tyrosine intermediate) is an active-site residue. 3 consecutive C4-type zinc fingers follow at residues 605-636 (CPTC…KERC), 667-694 (CPKC…NPNC), and 716-739 (CDKC…CTSC).

The protein belongs to the type IA topoisomerase family. As to quaternary structure, monomer. Mg(2+) serves as cofactor.

The enzyme catalyses ATP-independent breakage of single-stranded DNA, followed by passage and rejoining.. In terms of biological role, releases the supercoiling and torsional tension of DNA, which is introduced during the DNA replication and transcription, by transiently cleaving and rejoining one strand of the DNA duplex. Introduces a single-strand break via transesterification at a target site in duplex DNA. The scissile phosphodiester is attacked by the catalytic tyrosine of the enzyme, resulting in the formation of a DNA-(5'-phosphotyrosyl)-enzyme intermediate and the expulsion of a 3'-OH DNA strand. The free DNA strand then undergoes passage around the unbroken strand, thus removing DNA supercoils. Finally, in the religation step, the DNA 3'-OH attacks the covalent intermediate to expel the active-site tyrosine and restore the DNA phosphodiester backbone. The chain is DNA topoisomerase 1 from Pasteurella multocida (strain Pm70).